The following is a 566-amino-acid chain: MKISRQAYADMFGPTVGDKVRLADTELWIEVEKDFTTYGEEVKFGGGKVIRDGMGQGQLMAADVVDTLITNALIIDHWGIVKADVGIKNGRIAAIGKAGNPDIQPDVTIAVGAATEVIAGEGMILTAGGVDTHIHFICPQQIEEALMSGVTTMIGGGTGPATGTNATTVTPGPWHMARMLQASDSFPMNIGFTGKGNVSLPGPLIEQVKAGAIGLKLHEDWGTTPAAIDNCLSVADEYDVQVAIHSDTLNESGFVETTLAAFKNRTIHTYHTEGAGGGHAPDIIKACGSPNVLPSSTNPTRPFTRNTIDEHLDMLMVCHHLDPSIAEDVAFAESRIRRETIAAEDILHDLGAFSMLSSDSQAMGRVGEVIMRTWQTADKMKKQRGPLPQDGPGNDNFRAKRYIAKYTINPAITHGISHEVGSIEVGKWADLVLWRPAFFGVKPTLILKGGAIAASLMGDANASIPTPQPVHYRPMFASYGSSLHATSLTFISQAAFDAGVPESLGLKKQIGVVKGCRTVQKKDLIHNDYLPDIEVDPQTYQVKADGVLLWCEPADVLPMAQRYFLF.

Positions 128–566 (GGVDTHIHFI…LPMAQRYFLF (439 aa)) constitute a Urease domain. Positions 133, 135, and 216 each coordinate Ni(2+). At Lys216 the chain carries N6-carboxylysine. His218 is a binding site for substrate. 2 residues coordinate Ni(2+): His245 and His271. The Proton donor role is filled by His319. Asp359 is a Ni(2+) binding site.

Belongs to the metallo-dependent hydrolases superfamily. Urease alpha subunit family. In terms of assembly, may form a heterohexamer of 3 UreC (alpha) and 3 UreAB (gamma/beta) subunits. May also form a heterotrimer of UreA (gamma), UreB (beta) and UreC (alpha) subunits. Three heterotrimers associate to form the active enzyme. The cofactor is Ni cation. In terms of processing, carboxylation allows a single lysine to coordinate two nickel ions.

The protein localises to the cytoplasm. The catalysed reaction is urea + 2 H2O + H(+) = hydrogencarbonate + 2 NH4(+). The protein operates within nitrogen metabolism; urea degradation; CO(2) and NH(3) from urea (urease route): step 1/1. In Pseudomonas savastanoi pv. phaseolicola (strain 1448A / Race 6) (Pseudomonas syringae pv. phaseolicola (strain 1448A / Race 6)), this protein is Urease subunit alpha.